A 276-amino-acid chain; its full sequence is NADPH-dependent 7-cyano-7-deazaguanine reductase (276 aa).

83–85 (IES) contributes to the substrate binding site. 85–86 (SK) is a binding site for NADPH. Cysteine 184 acts as the Thioimide intermediate in catalysis. Residue aspartate 191 is the Proton donor of the active site. 223–224 (HE) provides a ligand contact to substrate. Position 252-253 (252-253 (RG)) interacts with NADPH.

Belongs to the GTP cyclohydrolase I family. QueF type 2 subfamily. Homodimer.

It is found in the cytoplasm. The enzyme catalyses 7-aminomethyl-7-carbaguanine + 2 NADP(+) = 7-cyano-7-deazaguanine + 2 NADPH + 3 H(+). It functions in the pathway tRNA modification; tRNA-queuosine biosynthesis. Functionally, catalyzes the NADPH-dependent reduction of 7-cyano-7-deazaguanine (preQ0) to 7-aminomethyl-7-deazaguanine (preQ1). The sequence is that of NADPH-dependent 7-cyano-7-deazaguanine reductase from Pseudomonas aeruginosa (strain ATCC 15692 / DSM 22644 / CIP 104116 / JCM 14847 / LMG 12228 / 1C / PRS 101 / PAO1).